We begin with the raw amino-acid sequence, 578 residues long: MIRTSVRRVVVNSNKFDVRSISNSSIRFNVPNNQRTPPPAVRPPTSPIIVTEGGPKGGSQKQKKKFSFAGFLFKTAFWASVVYGGTLFVATKNDKVMDFIMDKQPPYYEELLNVIEHGSIEDLKRQLRDTQHKISNFDFKLPSKAKIDEFTHELESRGENLIEETKRKLGTSTGAKPRQAIPEGNSAPTPAEQLQKPVETIHKTVDHLPLIQLDKGIASSVDSSIKSTIKSFNDLILSIDAGSQSGNESLMREITENVSKLSSKLNKLTSSFDEELSSKLKISQSELLSSYTKKELELTENLLHQFHHEKAQMEKKLGSRLDQEIEATKQTISQAAVNAVSMMRVEQTKNFEKLIKGKIDQERDGRLANLDKLNSRITELENFSTSLESQLVANHQKSLIQQSLTKLKSLLLGASSEQEKPRLISPYVDNLAKVSHESKDELIALALQDLQPLLSRESTQSILSTPQLLTRWEQLVPELRSASLLPPNAGLLGHLSSMLFSKLLFPVKGAKPDGKDIESVIGRVESSLARGELDVAVEEAANLKGWSRKLADDWVKEGRKKLEIEFLMKIIDAESKIL.

The N-terminal 28 residues, 1-28, are a transit peptide targeting the mitochondrion; that stretch reads MIRTSVRRVVVNSNKFDVRSISNSSIRF. The Mitochondrial matrix segment spans residues 29–68; that stretch reads NVPNNQRTPPPAVRPPTSPIIVTEGGPKGGSQKQKKKFSF. Residues 69 to 91 traverse the membrane as a helical segment; it reads AGFLFKTAFWASVVYGGTLFVAT. Topologically, residues 92–578 are mitochondrial intermembrane; that stretch reads KNDKVMDFIM…KIIDAESKIL (487 aa). The interval 169–191 is disordered; that stretch reads LGTSTGAKPRQAIPEGNSAPTPA. Positions 248 to 317 form a coiled coil; that stretch reads ESLMREITEN…HEKAQMEKKL (70 aa).

This sequence belongs to the MICOS complex subunit Mic60 family. As to quaternary structure, component of the mitochondrial contact site and cristae organizing system (MICOS) complex.

It is found in the mitochondrion inner membrane. Its function is as follows. Component of the MICOS complex, a large protein complex of the mitochondrial inner membrane that plays crucial roles in the maintenance of crista junctions, inner membrane architecture, and formation of contact sites to the outer membrane. Plays a role in keeping cristae membranes connected to the inner boundary membrane. Also promotes protein import via the mitochondrial intermembrane space assembly (MIA) pathway. In Debaryomyces hansenii (strain ATCC 36239 / CBS 767 / BCRC 21394 / JCM 1990 / NBRC 0083 / IGC 2968) (Yeast), this protein is MICOS complex subunit MIC60 (MIC60).